The primary structure comprises 295 residues: Elongation factor Ts (295 aa).

Residues 79-82 form an involved in Mg(2+) ion dislocation from EF-Tu region; that stretch reads TDFV.

It belongs to the EF-Ts family.

Its subcellular location is the cytoplasm. Associates with the EF-Tu.GDP complex and induces the exchange of GDP to GTP. It remains bound to the aminoacyl-tRNA.EF-Tu.GTP complex up to the GTP hydrolysis stage on the ribosome. The sequence is that of Elongation factor Ts from Bacillus cereus (strain B4264).